The sequence spans 112 residues: Conotoxin vil14.5 (112 aa).

Residues 1–22 (MGFRVLVLVVMATTSALPFTFS) form the signal peptide. The propeptide occupies 23–85 (EEPGRSPFRP…FAELSVGQRR (63 aa)). Residues 53–74 (RADGQPPDMRQPEMRRPEVRQP) are disordered. Basic and acidic residues predominate over residues 62 to 74 (RQPEMRRPEVRQP). Cystine bridges form between C91-C111 and C95-C107.

Belongs to the conotoxin R superfamily. In terms of tissue distribution, expressed by the venom duct.

Its subcellular location is the secreted. This is Conotoxin vil14.5 from Conus villepinii (Villepin's cone).